The primary structure comprises 151 residues: Methylglyoxal synthase (151 aa).

The 146-residue stretch at 6-151 (RVMPAHKHIA…DYDAYLAERV (146 aa)) folds into the MGS-like domain. Substrate contacts are provided by residues His19, Lys23, 45–48 (TGTT), and 65–66 (SG). Asp71 (proton donor/acceptor) is an active-site residue. His98 lines the substrate pocket.

This sequence belongs to the methylglyoxal synthase family.

The catalysed reaction is dihydroxyacetone phosphate = methylglyoxal + phosphate. Functionally, catalyzes the formation of methylglyoxal from dihydroxyacetone phosphate. In Aliivibrio fischeri (strain ATCC 700601 / ES114) (Vibrio fischeri), this protein is Methylglyoxal synthase.